Consider the following 326-residue polypeptide: Beta-ketoacyl-[acyl-carrier-protein] synthase III (326 aa).

Residues Cys111 and His252 contribute to the active site. Residues Gln253–Arg257 are ACP-binding. Asn282 is a catalytic residue.

The protein belongs to the thiolase-like superfamily. FabH family. As to quaternary structure, homodimer.

It localises to the plastid. The protein resides in the chloroplast. It catalyses the reaction malonyl-[ACP] + acetyl-CoA + H(+) = 3-oxobutanoyl-[ACP] + CO2 + CoA. It functions in the pathway lipid metabolism; fatty acid biosynthesis. Catalyzes the condensation reaction of fatty acid synthesis by the addition to an acyl acceptor of two carbons from malonyl-ACP. Catalyzes the first condensation reaction which initiates fatty acid synthesis and may therefore play a role in governing the total rate of fatty acid production. Possesses both acetoacetyl-ACP synthase and acetyl transacylase activities. Its substrate specificity determines the biosynthesis of branched-chain and/or straight-chain of fatty acids. This chain is Beta-ketoacyl-[acyl-carrier-protein] synthase III, found in Porphyra purpurea (Red seaweed).